The following is a 561-amino-acid chain: Glutamate--tRNA ligase (561 aa).

The short motif at proline 107–histidine 117 is the 'HIGH' region element.

The protein belongs to the class-I aminoacyl-tRNA synthetase family. Glutamate--tRNA ligase type 2 subfamily.

It localises to the cytoplasm. It carries out the reaction tRNA(Glu) + L-glutamate + ATP = L-glutamyl-tRNA(Glu) + AMP + diphosphate. Functionally, catalyzes the attachment of glutamate to tRNA(Glu) in a two-step reaction: glutamate is first activated by ATP to form Glu-AMP and then transferred to the acceptor end of tRNA(Glu). This Methanospirillum hungatei JF-1 (strain ATCC 27890 / DSM 864 / NBRC 100397 / JF-1) protein is Glutamate--tRNA ligase.